The primary structure comprises 328 residues: Beta-ketoacyl-[acyl-carrier-protein] synthase III 2 (328 aa).

Active-site residues include Cys-113 and His-255. Residues 256-260 (QANAR) form an ACP-binding region. Asn-285 is an active-site residue.

It belongs to the thiolase-like superfamily. FabH family. Homodimer.

It is found in the cytoplasm. The enzyme catalyses malonyl-[ACP] + acetyl-CoA + H(+) = 3-oxobutanoyl-[ACP] + CO2 + CoA. Its pathway is lipid metabolism; fatty acid biosynthesis. In terms of biological role, catalyzes the condensation reaction of fatty acid synthesis by the addition to an acyl acceptor of two carbons from malonyl-ACP. Catalyzes the first condensation reaction which initiates fatty acid synthesis and may therefore play a role in governing the total rate of fatty acid production. Possesses both acetoacetyl-ACP synthase and acetyl transacylase activities. Its substrate specificity determines the biosynthesis of branched-chain and/or straight-chain of fatty acids. In Lactiplantibacillus plantarum (strain ATCC BAA-793 / NCIMB 8826 / WCFS1) (Lactobacillus plantarum), this protein is Beta-ketoacyl-[acyl-carrier-protein] synthase III 2.